The sequence spans 502 residues: Glutamate--tRNA ligase (502 aa).

The 'HIGH' region motif lies at 9 to 19 (PSPTGDPHVGT). Cys106, Cys108, Cys133, and His135 together coordinate Zn(2+). The 'KMSKS' region signature appears at 250–254 (KLSKR). An ATP-binding site is contributed by Lys253.

Belongs to the class-I aminoacyl-tRNA synthetase family. Glutamate--tRNA ligase type 1 subfamily. In terms of assembly, monomer. It depends on Zn(2+) as a cofactor.

The protein localises to the cytoplasm. It catalyses the reaction tRNA(Glu) + L-glutamate + ATP = L-glutamyl-tRNA(Glu) + AMP + diphosphate. Catalyzes the attachment of glutamate to tRNA(Glu) in a two-step reaction: glutamate is first activated by ATP to form Glu-AMP and then transferred to the acceptor end of tRNA(Glu). The sequence is that of Glutamate--tRNA ligase from Protochlamydia amoebophila (strain UWE25).